Here is a 1098-residue protein sequence, read N- to C-terminus: Eukaryotic translation initiation factor 3 subunit A (1098 aa).

Positions 324–503 (AQEQATRVLL…DCVRFGSSDA (180 aa)) constitute a PCI domain. A coiled-coil region spans residues 574–844 (TEIERIHRRK…ARQAVIDSQR (271 aa)). Disordered regions lie at residues 599-648 (EKAA…KIKR) and 805-1098 (RAEK…NWRR). Composition is skewed to basic and acidic residues over residues 608–648 (QAKR…KIKR), 805–857 (RAEK…REME), and 877–895 (MPQR…EPFR). Residues 905–914 (DSSWRSSAQP) are compositionally biased toward polar residues. Basic and acidic residues-rich tracts occupy residues 916 to 978 (RKPD…ERGA) and 1054 to 1079 (LPPR…RDGP). The span at 1080–1098 (NRNSGANNAGNADSANWRR) shows a compositional bias: low complexity.

Belongs to the eIF-3 subunit A family. In terms of assembly, component of the eukaryotic translation initiation factor 3 (eIF-3) complex.

It localises to the cytoplasm. RNA-binding component of the eukaryotic translation initiation factor 3 (eIF-3) complex, which is involved in protein synthesis of a specialized repertoire of mRNAs and, together with other initiation factors, stimulates binding of mRNA and methionyl-tRNAi to the 40S ribosome. The eIF-3 complex specifically targets and initiates translation of a subset of mRNAs involved in cell proliferation. This is Eukaryotic translation initiation factor 3 subunit A from Caenorhabditis briggsae.